We begin with the raw amino-acid sequence, 486 residues long: Cobyric acid synthase (486 aa).

The GATase cobBQ-type domain maps to 248–439 (VLRIVVPALP…LHGLFDTPHA (192 aa)). Cys328 serves as the catalytic Nucleophile. Residue His431 is part of the active site.

It belongs to the CobB/CobQ family. CobQ subfamily.

It participates in cofactor biosynthesis; adenosylcobalamin biosynthesis. Functionally, catalyzes amidations at positions B, D, E, and G on adenosylcobyrinic A,C-diamide. NH(2) groups are provided by glutamine, and one molecule of ATP is hydrogenolyzed for each amidation. The protein is Cobyric acid synthase of Burkholderia mallei (strain ATCC 23344).